The sequence spans 298 residues: Glutamyl-Q tRNA(Asp) synthetase (298 aa).

Residues 9-13 and glutamate 45 each bind L-glutamate; that span reads RFAPS. Residues 12 to 22 carry the 'HIGH' region motif; the sequence is PSPSGELHFGS. Zn(2+)-binding residues include cysteine 101, cysteine 103, tyrosine 115, and cysteine 119. L-glutamate is bound by residues tyrosine 172 and arginine 190. The 'KMSKS' region signature appears at 228-232; the sequence is KLSKQ. Residue lysine 231 participates in ATP binding.

The protein belongs to the class-I aminoacyl-tRNA synthetase family. GluQ subfamily. Zn(2+) serves as cofactor.

Catalyzes the tRNA-independent activation of glutamate in presence of ATP and the subsequent transfer of glutamate onto a tRNA(Asp). Glutamate is transferred on the 2-amino-5-(4,5-dihydroxy-2-cyclopenten-1-yl) moiety of the queuosine in the wobble position of the QUC anticodon. The sequence is that of Glutamyl-Q tRNA(Asp) synthetase from Citrobacter koseri (strain ATCC BAA-895 / CDC 4225-83 / SGSC4696).